Consider the following 772-residue polypeptide: Uracil catabolism protein 2 (772 aa).

Positions 1–70 (MDINSNASVS…KKPRKKRKTF (70 aa)) are disordered. Basic and acidic residues predominate over residues 39 to 51 (HPEDSARAKERSE). Over residues 59–69 (GNKKPRKKRKT) the composition is skewed to basic residues. Residues 72-101 (CDTCRRVKTRCDFEPFIGKCYRCNVLQLDC) constitute a DNA-binding region (zn(2)-C6 fungal-type).

The protein belongs to the URC2 family.

It localises to the cytoplasm. The protein resides in the nucleus. Probable transcriptional activator involved in uracil catabolism. This is Uracil catabolism protein 2 (URC2) from Saccharomyces cerevisiae (strain ATCC 204508 / S288c) (Baker's yeast).